The sequence spans 262 residues: Polyamine aminopropyltransferase (262 aa).

The PABS domain occupies 1–249 (MWITQEITPY…DIHRAAFALP (249 aa)). S-methyl-5'-thioadenosine is bound at residue asparagine 29. Spermidine is bound at residue aspartate 83. Residue aspartate 155 is the Proton acceptor of the active site.

Belongs to the spermidine/spermine synthase family. As to quaternary structure, homodimer or homotetramer.

It localises to the cytoplasm. It carries out the reaction S-adenosyl 3-(methylsulfanyl)propylamine + putrescine = S-methyl-5'-thioadenosine + spermidine + H(+). The protein operates within amine and polyamine biosynthesis; spermidine biosynthesis; spermidine from putrescine: step 1/1. Catalyzes the irreversible transfer of a propylamine group from the amino donor S-adenosylmethioninamine (decarboxy-AdoMet) to putrescine (1,4-diaminobutane) to yield spermidine. The protein is Polyamine aminopropyltransferase of Helicobacter pylori (strain G27).